A 254-amino-acid polypeptide reads, in one-letter code: Small ribosomal subunit protein uS2 (254 aa).

It belongs to the universal ribosomal protein uS2 family.

The chain is Small ribosomal subunit protein uS2 from Legionella pneumophila subsp. pneumophila (strain Philadelphia 1 / ATCC 33152 / DSM 7513).